The primary structure comprises 155 residues: NADPH-dependent 7-cyano-7-deazaguanine reductase (155 aa).

Cys-53 acts as the Thioimide intermediate in catalysis. Asp-60 (proton donor) is an active-site residue. Residues 75-77 (VES) and 94-95 (HE) contribute to the substrate site.

It belongs to the GTP cyclohydrolase I family. QueF type 1 subfamily.

The protein localises to the cytoplasm. It catalyses the reaction 7-aminomethyl-7-carbaguanine + 2 NADP(+) = 7-cyano-7-deazaguanine + 2 NADPH + 3 H(+). It functions in the pathway tRNA modification; tRNA-queuosine biosynthesis. In terms of biological role, catalyzes the NADPH-dependent reduction of 7-cyano-7-deazaguanine (preQ0) to 7-aminomethyl-7-deazaguanine (preQ1). The protein is NADPH-dependent 7-cyano-7-deazaguanine reductase of Hyphomonas neptunium (strain ATCC 15444).